Reading from the N-terminus, the 1282-residue chain is Ribosome biogenesis protein BMS1 homolog (1282 aa).

Basic residues predominate over residues 1 to 24 (MEAKDQKKHRKKNSGPKAAKKKKR). Residues 1-43 (MEAKDQKKHRKKNSGPKAAKKKKRLLQDLQLGDEEDARKRNPK) form a disordered region. Lysine 43 participates in a covalent cross-link: Glycyl lysine isopeptide (Lys-Gly) (interchain with G-Cter in SUMO2). The region spanning 80-245 (PPPIVVVVMG…GRFITVMKFR (166 aa)) is the Bms1-type G domain. Positions 89 to 96 (GPPKVGKS) are G1. Residue 89-96 (GPPKVGKS) participates in ATP binding. Positions 117 to 121 (PVTIV) are G2. The segment at 132–135 (ECGC) is G3. Positions 184-187 (THLD) are G4. Residue serine 188 is modified to Phosphoserine. Positions 219–228 (LSGMVHGEYQ) are G5. Disordered regions lie at residues 397 to 557 (DSKP…ANCQ) and 575 to 667 (PTFD…ALKW). Glycyl lysine isopeptide (Lys-Gly) (interchain with G-Cter in SUMO2) cross-links involve residues lysine 399 and lysine 415. 2 stretches are compositionally biased toward acidic residues: residues 434 to 472 (GDED…ENAE) and 503 to 531 (DSDD…EDCT). Low complexity predominate over residues 535–550 (KGISGSKAAGEGSKAG). The residue at position 552 (serine 552) is a Phosphoserine. Residues 588 to 610 (FASEDESEESSSLSAEEEDSENE) are compositionally biased toward acidic residues. Phosphoserine is present on residues serine 625 and serine 639. Lysine 646 participates in a covalent cross-link: Glycyl lysine isopeptide (Lys-Gly) (interchain with G-Cter in SUMO2). Over residues 653–667 (EENNDSKETSGALKW) the composition is skewed to basic and acidic residues. The residue at position 708 (threonine 708) is a Phosphothreonine. 2 disordered regions span residues 787-822 (ETGD…ESAK) and 1178-1202 (NKPK…IREP). A Glycyl lysine isopeptide (Lys-Gly) (interchain with G-Cter in SUMO1); alternate cross-link involves residue lysine 810. Lysine 810 is covalently cross-linked (Glycyl lysine isopeptide (Lys-Gly) (interchain with G-Cter in SUMO2); alternate). Residue lysine 1206 forms a Glycyl lysine isopeptide (Lys-Gly) (interchain with G-Cter in SUMO2) linkage. A disordered region spans residues 1219–1282 (SQKMKKAKEQ…SLKGAEGQLQ (64 aa)). Basic and acidic residues predominate over residues 1228-1248 (QRHLHNKEHFRAKQKEEEEKL). The segment covering 1249–1259 (KRQKDLRKKLF) has biased composition (basic residues).

The protein belongs to the TRAFAC class translation factor GTPase superfamily. Bms1-like GTPase family. BMS1 subfamily. As to quaternary structure, part of the small subunit (SSU) processome, composed of more than 70 proteins and the RNA chaperone small nucleolar RNA (snoRNA) U3. Interacts with RCL1.

The protein resides in the nucleus. It is found in the nucleolus. The enzyme catalyses GTP + H2O = GDP + phosphate + H(+). Its function is as follows. GTPase required for the synthesis of 40S ribosomal subunits and for processing of pre-ribosomal RNA (pre-rRNA) at sites A0, A1, and A2. Controls access of pre-rRNA intermediates to RCL1 during ribosome biogenesis by binding RCL1 in a GTP-dependent manner, and delivering it to pre-ribosomes. GTP-binding and/or GTP hydrolysis may induce conformational rearrangements within the BMS1-RCL1 complex allowing the interaction of RCL1 with its RNA substrate. Required for RCL1 import into the nucleus. In Homo sapiens (Human), this protein is Ribosome biogenesis protein BMS1 homolog.